The primary structure comprises 314 residues: MSRPRRRGRDIHGVLLLDKPQGMSSNDVLQKVKRIYNANRAGHTGALDPLATGMLPICLGEATKFSQYLLDSDKRYRVIARLGQRTDTSDADGQIVQERPVTFSAEQLASALETFRGDIEQIPSMYSALKYQGKKLYEYARQGIEVPREARPITVYELLFIRHEGNELELEVHCSKGTYIRTIIDDLGEKLGCGAHVTYLRRLTVSKYPVDRMVTLEHLQTLVAQAEQQGVPAAQLLDPLLMPMDSPASDYPVVNLPLTSSVYFKNGNPVRTTGAPLKGLVRVTEGEDDKFIGMGEIDDEGRVAPRRLVVEYPA.

His43 provides a ligand contact to substrate. The active-site Nucleophile is Asp48. Residues Tyr76, Tyr179, and Leu200 each coordinate substrate.

This sequence belongs to the pseudouridine synthase TruB family. Type 1 subfamily.

The enzyme catalyses uridine(55) in tRNA = pseudouridine(55) in tRNA. Its function is as follows. Responsible for synthesis of pseudouridine from uracil-55 in the psi GC loop of transfer RNAs. The sequence is that of tRNA pseudouridine synthase B from Salmonella choleraesuis (strain SC-B67).